A 96-amino-acid chain; its full sequence is Protein Vpr (96 aa).

The tract at residues Met1 to Leu42 is homooligomerization. Residues Ser79, Ser94, and Ser96 each carry the phosphoserine; by host modification.

Belongs to the HIV-1 VPR protein family. Homooligomer, may form homodimer. Interacts with p6-gag region of the Pr55 Gag precursor protein through a (Leu-X-X)4 motif near the C-terminus of the P6gag protein. Interacts with host UNG. May interact with host RAD23A/HHR23A. Interacts with host VPRBP/DCAF1, leading to hijack the CUL4A-RBX1-DDB1-DCAF1/VPRBP complex, mediating ubiquitination of host proteins such as TERT and ZGPAT and arrest of the cell cycle in G2 phase. Post-translationally, phosphorylated on several residues by host. These phosphorylations regulate VPR activity for the nuclear import of the HIV-1 pre-integration complex.

The protein localises to the virion. It localises to the host nucleus. The protein resides in the host extracellular space. During virus replication, may deplete host UNG protein, and incude G2-M cell cycle arrest. Acts by targeting specific host proteins for degradation by the 26S proteasome, through association with the cellular CUL4A-DDB1 E3 ligase complex by direct interaction with host VPRPB/DCAF-1. Cell cycle arrest reportedly occurs within hours of infection and is not blocked by antiviral agents, suggesting that it is initiated by the VPR carried into the virion. Additionally, VPR induces apoptosis in a cell cycle dependent manner suggesting that these two effects are mechanistically linked. Detected in the serum and cerebrospinal fluid of AIDS patient, VPR may also induce cell death to bystander cells. In terms of biological role, during virus entry, plays a role in the transport of the viral pre-integration (PIC) complex to the host nucleus. This function is crucial for viral infection of non-dividing macrophages. May act directly at the nuclear pore complex, by binding nucleoporins phenylalanine-glycine (FG)-repeat regions. The sequence is that of Protein Vpr from Human immunodeficiency virus type 1 group M subtype K (isolate 96CM-MP535) (HIV-1).